A 296-amino-acid polypeptide reads, in one-letter code: MMPLLDKLREQYGVGPLCSELHIAPSTYYHCQQQRHHPDKRSARAQRDDWLKKEIQRVYDENHKVYGVRKVWRQLLREGIRVARCTVARLMAVMGLAGVLRGKKVRTTISRKAVAAGDRVNRQFVAERPDQLWVADFTYVSTWQGFVYVAFIIDVFAGYIVGWRVSSSMETTFVLDALEQALWARRPSGTVHHSDKGSQYVSLAYTQRLKEAGLLASTGSTGDSYDNAMAESINGLYKAKVIHRKSWKNRAEVELATLTWVDWYNNRRLLERLGHTPPAEAEKAYYASIGNDDLAA.

The region spanning 125 to 285 (VAERPDQLWV…TPPAEAEKAY (161 aa)) is the Integrase catalytic domain.

Its function is as follows. Involved in the transposition of the insertion sequence. The polypeptide is Transposase for insertion sequence element IS629 (Shigella sonnei).